A 281-amino-acid polypeptide reads, in one-letter code: 2,3,4,5-tetrahydropyridine-2,6-dicarboxylate N-succinyltransferase (281 aa).

The substrate site is built by R108 and D145.

This sequence belongs to the transferase hexapeptide repeat family. In terms of assembly, homotrimer.

The protein localises to the cytoplasm. The catalysed reaction is (S)-2,3,4,5-tetrahydrodipicolinate + succinyl-CoA + H2O = (S)-2-succinylamino-6-oxoheptanedioate + CoA. It functions in the pathway amino-acid biosynthesis; L-lysine biosynthesis via DAP pathway; LL-2,6-diaminopimelate from (S)-tetrahydrodipicolinate (succinylase route): step 1/3. This is 2,3,4,5-tetrahydropyridine-2,6-dicarboxylate N-succinyltransferase from Methylobacterium nodulans (strain LMG 21967 / CNCM I-2342 / ORS 2060).